A 486-amino-acid chain; its full sequence is Glutamyl-tRNA(Gln) amidotransferase subunit A (486 aa).

Catalysis depends on charge relay system residues Lys-74 and Ser-149. The active-site Acyl-ester intermediate is the Ser-173.

This sequence belongs to the amidase family. GatA subfamily. Heterotrimer of A, B and C subunits.

The enzyme catalyses L-glutamyl-tRNA(Gln) + L-glutamine + ATP + H2O = L-glutaminyl-tRNA(Gln) + L-glutamate + ADP + phosphate + H(+). Functionally, allows the formation of correctly charged Gln-tRNA(Gln) through the transamidation of misacylated Glu-tRNA(Gln) in organisms which lack glutaminyl-tRNA synthetase. The reaction takes place in the presence of glutamine and ATP through an activated gamma-phospho-Glu-tRNA(Gln). The polypeptide is Glutamyl-tRNA(Gln) amidotransferase subunit A (Prochlorococcus marinus (strain MIT 9313)).